The sequence spans 599 residues: Elongation factor 4 (599 aa).

Residues D5 to K187 enclose the tr-type G domain. Residues D17–T22 and N134–D137 each bind GTP.

Belongs to the TRAFAC class translation factor GTPase superfamily. Classic translation factor GTPase family. LepA subfamily.

The protein localises to the cell inner membrane. The catalysed reaction is GTP + H2O = GDP + phosphate + H(+). Functionally, required for accurate and efficient protein synthesis under certain stress conditions. May act as a fidelity factor of the translation reaction, by catalyzing a one-codon backward translocation of tRNAs on improperly translocated ribosomes. Back-translocation proceeds from a post-translocation (POST) complex to a pre-translocation (PRE) complex, thus giving elongation factor G a second chance to translocate the tRNAs correctly. Binds to ribosomes in a GTP-dependent manner. This Cereibacter sphaeroides (strain ATCC 17025 / ATH 2.4.3) (Rhodobacter sphaeroides) protein is Elongation factor 4.